The following is a 391-amino-acid chain: Protein-glutamate methylesterase/protein-glutamine glutaminase of group 2 operon (391 aa).

The 119-residue stretch at 20–138 (RVMIVDDSVV…EPQAADIFKH (119 aa)) folds into the Response regulatory domain. Position 71 is a 4-aspartylphosphate (D71). The 188-residue stretch at 196–383 (PTAPRVLLIG…PLNQIGPKVV (188 aa)) folds into the CheB-type methylesterase domain. Residues S207, H235, and D331 contribute to the active site.

It belongs to the CheB family. Post-translationally, phosphorylated by CheA. Phosphorylation of the N-terminal regulatory domain activates the methylesterase activity.

Its subcellular location is the cytoplasm. The enzyme catalyses [protein]-L-glutamate 5-O-methyl ester + H2O = L-glutamyl-[protein] + methanol + H(+). The catalysed reaction is L-glutaminyl-[protein] + H2O = L-glutamyl-[protein] + NH4(+). Its function is as follows. Involved in chemotaxis. Part of a chemotaxis signal transduction system that modulates chemotaxis in response to various stimuli. Catalyzes the demethylation of specific methylglutamate residues introduced into the chemoreceptors (methyl-accepting chemotaxis proteins or MCP) by CheR. Also mediates the irreversible deamidation of specific glutamine residues to glutamic acid. The protein is Protein-glutamate methylesterase/protein-glutamine glutaminase of group 2 operon of Rhodopseudomonas palustris (strain ATCC BAA-98 / CGA009).